A 967-amino-acid polypeptide reads, in one-letter code: Kinesin-like protein KIF28P (967 aa).

Positions 7-355 (DSVKAVRVRP…LRYAERERKI (349 aa)) constitute a Kinesin motor domain. 111-118 (GQTGSGKS) is a binding site for ATP. The region spanning 410-472 (APCPRPALSP…LQHLDRLILG (63 aa)) is the FHA domain. Positions 822 to 851 (NQIPELYLKLLKLEQETEPLRNINRALREE) form a coiled coil.

This sequence belongs to the TRAFAC class myosin-kinesin ATPase superfamily. Kinesin family.

Its subcellular location is the mitochondrion membrane. In terms of biological role, microtubule-dependent motor protein required for mitochondrion morphology and transport of mitochondria in neuronal cells. This Homo sapiens (Human) protein is Kinesin-like protein KIF28P (KIF28P).